Here is a 320-residue protein sequence, read N- to C-terminus: Cilia- and flagella-associated protein 77 (320 aa).

The tract at residues 1-27 (MPEARSSGPDLTRWRKQQQPVRRTVSQ) is disordered. Polar residues predominate over residues 17–27 (QQQPVRRTVSQ).

The protein belongs to the CFAP77 family. Microtubule inner protein component of sperm flagellar doublet microtubules. As to expression, expressed in airway epithelial cells.

The protein resides in the cytoplasm. The protein localises to the cytoskeleton. It localises to the cilium axoneme. It is found in the flagellum axoneme. Functionally, microtubule inner protein (MIP) part of the dynein-decorated doublet microtubules (DMTs) in cilia axoneme, which is required for motile cilia beating. The chain is Cilia- and flagella-associated protein 77 from Homo sapiens (Human).